A 183-amino-acid chain; its full sequence is Acireductone dioxygenase (183 aa).

4 residues coordinate Fe(2+): H95, H97, E101, and H139. Ni(2+) contacts are provided by H95, H97, E101, and H139.

The protein belongs to the acireductone dioxygenase (ARD) family. Monomer. The cofactor is Fe(2+). Requires Ni(2+) as cofactor.

The enzyme catalyses 1,2-dihydroxy-5-(methylsulfanyl)pent-1-en-3-one + O2 = 3-(methylsulfanyl)propanoate + CO + formate + 2 H(+). The catalysed reaction is 1,2-dihydroxy-5-(methylsulfanyl)pent-1-en-3-one + O2 = 4-methylsulfanyl-2-oxobutanoate + formate + 2 H(+). It functions in the pathway amino-acid biosynthesis; L-methionine biosynthesis via salvage pathway; L-methionine from S-methyl-5-thio-alpha-D-ribose 1-phosphate: step 5/6. In terms of biological role, catalyzes 2 different reactions between oxygen and the acireductone 1,2-dihydroxy-3-keto-5-methylthiopentene (DHK-MTPene) depending upon the metal bound in the active site. Fe-containing acireductone dioxygenase (Fe-ARD) produces formate and 2-keto-4-methylthiobutyrate (KMTB), the alpha-ketoacid precursor of methionine in the methionine recycle pathway. Ni-containing acireductone dioxygenase (Ni-ARD) produces methylthiopropionate, carbon monoxide and formate, and does not lie on the methionine recycle pathway. In Aquifex aeolicus (strain VF5), this protein is Acireductone dioxygenase.